The chain runs to 343 residues: Dihydroorotase (343 aa).

The Zn(2+) site is built by His13 and His15. Residues 15–17 and Asn41 contribute to the substrate site; that span reads HLR. Zn(2+) is bound by residues Lys99, His136, and His174. N6-carboxylysine is present on Lys99. His136 is a substrate binding site. Leu219 is a substrate binding site. Asp247 serves as a coordination point for Zn(2+). Residue Asp247 is part of the active site. Substrate-binding residues include His251 and Ala263.

This sequence belongs to the metallo-dependent hydrolases superfamily. DHOase family. Class II DHOase subfamily. Homodimer. The cofactor is Zn(2+).

The enzyme catalyses (S)-dihydroorotate + H2O = N-carbamoyl-L-aspartate + H(+). It functions in the pathway pyrimidine metabolism; UMP biosynthesis via de novo pathway; (S)-dihydroorotate from bicarbonate: step 3/3. Its function is as follows. Catalyzes the reversible cyclization of carbamoyl aspartate to dihydroorotate. In Shewanella oneidensis (strain ATCC 700550 / JCM 31522 / CIP 106686 / LMG 19005 / NCIMB 14063 / MR-1), this protein is Dihydroorotase.